Consider the following 100-residue polypeptide: uncharacterized protein (100 aa).

This is an uncharacterized protein from Acheta domesticus (House cricket).